The following is a 330-amino-acid chain: Membrane progestin receptor gamma (330 aa).

The Cytoplasmic segment spans residues 1-51 (MLSLKLPRLFRIDQVPQVFHEQGILFGYRHPQSSATACILSLFQMTNETLN). The helical transmembrane segment at 52 to 72 (IWTHLLPFWFFVWRFMTALYV) threads the bilayer. Over 73 to 81 (TDIQNDSYS) the chain is Extracellular. The helical transmembrane segment at 82–101 (WPMLVYMCTSCVYPLASSCA) threads the bilayer. Residues 102–113 (HTFSSMSKNARH) lie on the Cytoplasmic side of the membrane. Residues 114–134 (ICYFLDYGAVNLFSLGSAIAY) traverse the membrane as a helical segment. Topologically, residues 135-141 (SAYTFPD) are extracellular. The helical transmembrane segment at 142 to 162 (ALVCSTFHECYVALAVLNTIL) threads the bilayer. Residues 163–186 (STGLSCYSRFLELQKPRLCKLLRV) are Cytoplasmic-facing. The chain crosses the membrane as a helical span at residues 187-207 (LAFAYPYTWDSLPIFYRLFLF). Residues 208–253 (PGESSRNEAMLYHQKHMGMTLLASFFYSAHLPERLAPGRFDYIGHS) lie on the Extracellular side of the membrane. A helical membrane pass occupies residues 254–274 (HQLFHVCVILATHLQMEAILL). Topologically, residues 275–294 (DKTLRREWLLATSRPFSFPQ) are cytoplasmic. The helical transmembrane segment at 295 to 315 (IAAAMLLCIIFSLSNIIYFSA) threads the bilayer. At 316-330 (ALYRIPEPELHEKET) the chain is on the extracellular side.

It belongs to the ADIPOR family.

It is found in the cell membrane. Plasma membrane progesterone (P4) receptor coupled to G proteins. Seems to act through a G(i) mediated pathway. May be involved in oocyte maturation. The sequence is that of Membrane progestin receptor gamma from Mus musculus (Mouse).